We begin with the raw amino-acid sequence, 61 residues long: Large ribosomal subunit protein uL29 (61 aa).

It belongs to the universal ribosomal protein uL29 family.

This chain is Large ribosomal subunit protein uL29, found in Stenotrophomonas maltophilia (strain K279a).